Consider the following 273-residue polypeptide: uncharacterized protein (273 aa).

Residues 1-10 are compositionally biased toward basic residues; that stretch reads MSSKKVKYNP. Disordered regions lie at residues 1-32 and 50-124; these read MSSK…FGFN and EDVE…QSSP. 3 stretches are compositionally biased toward polar residues: residues 12-24, 55-64, and 92-124; these read KSAS…SASA, QSFNGKSSNL, and PQSS…QSSP. The residue at position 123 (Ser-123) is a Phosphoserine.

Its subcellular location is the nucleus. The protein resides in the cytoplasm. It is found in the cytoskeleton. The protein localises to the spindle. This is an uncharacterized protein from Schizosaccharomyces pombe (strain 972 / ATCC 24843) (Fission yeast).